We begin with the raw amino-acid sequence, 111 residues long: Probable 4-amino-4-deoxy-L-arabinose-phosphoundecaprenol flippase subunit ArnE (111 aa).

3 helical membrane passes run 38–58, 61–81, and 91–111; these read LWLG…LLVL, LPVG…TLAA, and PRHW…GSAA. Positions 40-109 constitute an EamA domain; it reads LGLALICMGA…IISGIIILGS (70 aa).

Belongs to the ArnE family. Heterodimer of ArnE and ArnF.

The protein localises to the cell inner membrane. It participates in bacterial outer membrane biogenesis; lipopolysaccharide biosynthesis. In terms of biological role, translocates 4-amino-4-deoxy-L-arabinose-phosphoundecaprenol (alpha-L-Ara4N-phosphoundecaprenol) from the cytoplasmic to the periplasmic side of the inner membrane. This chain is Probable 4-amino-4-deoxy-L-arabinose-phosphoundecaprenol flippase subunit ArnE, found in Salmonella agona (strain SL483).